Consider the following 495-residue polypeptide: Glutamyl-tRNA(Gln) amidotransferase subunit A (495 aa).

Residues Lys75 and Ser150 each act as charge relay system in the active site. Ser174 (acyl-ester intermediate) is an active-site residue.

The protein belongs to the amidase family. GatA subfamily. Heterotrimer of A, B and C subunits.

It carries out the reaction L-glutamyl-tRNA(Gln) + L-glutamine + ATP + H2O = L-glutaminyl-tRNA(Gln) + L-glutamate + ADP + phosphate + H(+). Allows the formation of correctly charged Gln-tRNA(Gln) through the transamidation of misacylated Glu-tRNA(Gln) in organisms which lack glutaminyl-tRNA synthetase. The reaction takes place in the presence of glutamine and ATP through an activated gamma-phospho-Glu-tRNA(Gln). The protein is Glutamyl-tRNA(Gln) amidotransferase subunit A of Ralstonia nicotianae (strain ATCC BAA-1114 / GMI1000) (Ralstonia solanacearum).